The following is a 243-amino-acid chain: DNA repair protein RecO (243 aa).

This sequence belongs to the RecO family.

Involved in DNA repair and RecF pathway recombination. The polypeptide is DNA repair protein RecO (Xylella fastidiosa (strain M12)).